The chain runs to 169 residues: Lipoprotein signal peptidase (169 aa).

Helical transmembrane passes span 1–21, 68–88, and 94–114; these read MPES…LILV, WQRW…VVWL, and HETL…GNLY. Residues Asp124 and Asp143 contribute to the active site. A helical membrane pass occupies residues 135 to 155; the sequence is FFPAFNLADTFITIGAILLAL.

This sequence belongs to the peptidase A8 family.

Its subcellular location is the cell inner membrane. The catalysed reaction is Release of signal peptides from bacterial membrane prolipoproteins. Hydrolyzes -Xaa-Yaa-Zaa-|-(S,diacylglyceryl)Cys-, in which Xaa is hydrophobic (preferably Leu), and Yaa (Ala or Ser) and Zaa (Gly or Ala) have small, neutral side chains.. Its pathway is protein modification; lipoprotein biosynthesis (signal peptide cleavage). Functionally, this protein specifically catalyzes the removal of signal peptides from prolipoproteins. The protein is Lipoprotein signal peptidase of Ectopseudomonas mendocina (strain ymp) (Pseudomonas mendocina).